Reading from the N-terminus, the 200-residue chain is Large ribosomal subunit protein uL4 (200 aa).

Residues 43–71 (RAQKTRAEVSGSGKKPWRQKGTGRARSGD) form a disordered region.

It belongs to the universal ribosomal protein uL4 family. In terms of assembly, part of the 50S ribosomal subunit.

Its function is as follows. One of the primary rRNA binding proteins, this protein initially binds near the 5'-end of the 23S rRNA. It is important during the early stages of 50S assembly. It makes multiple contacts with different domains of the 23S rRNA in the assembled 50S subunit and ribosome. Functionally, forms part of the polypeptide exit tunnel. The chain is Large ribosomal subunit protein uL4 from Mannheimia succiniciproducens (strain KCTC 0769BP / MBEL55E).